We begin with the raw amino-acid sequence, 338 residues long: DNA-directed RNA polymerase subunit alpha (338 aa).

The segment at 1–226 (MLIAQRPTLS…ELFGLARELN (226 aa)) is alpha N-terminal domain (alpha-NTD). An alpha C-terminal domain (alpha-CTD) region spans residues 240–338 (DEQLAADLAL…DDAFVEDEQY (99 aa)).

This sequence belongs to the RNA polymerase alpha chain family. As to quaternary structure, homodimer. The RNAP catalytic core consists of 2 alpha, 1 beta, 1 beta' and 1 omega subunit. When a sigma factor is associated with the core the holoenzyme is formed, which can initiate transcription.

The enzyme catalyses RNA(n) + a ribonucleoside 5'-triphosphate = RNA(n+1) + diphosphate. Its function is as follows. DNA-dependent RNA polymerase catalyzes the transcription of DNA into RNA using the four ribonucleoside triphosphates as substrates. This Nocardioides sp. (strain ATCC BAA-499 / JS614) protein is DNA-directed RNA polymerase subunit alpha.